We begin with the raw amino-acid sequence, 543 residues long: Cytochrome P450 52A1 (543 aa).

Residues 1–28 (MSSSPSIAQEFLATITPYVEYCQENYTK) are Lumenal-facing. The helical transmembrane segment at 29-48 (WYYFIPLVILSLNLISMLHT) threads the bilayer. Over 49-543 (KYLERKFKAK…GAEVQMYLIL (495 aa)) the chain is Cytoplasmic. Cysteine 487 contributes to the heme binding site.

This sequence belongs to the cytochrome P450 family. Requires heme as cofactor.

The protein localises to the endoplasmic reticulum membrane. Together with an NADPH cytochrome P450 the enzyme system catalyzes the terminal hydroxylation as the first step in the assimilation of alkanes and fatty acids. The sequence is that of Cytochrome P450 52A1 (CYP52A1) from Candida tropicalis (Yeast).